A 739-amino-acid polypeptide reads, in one-letter code: Nucleoprotein (739 aa).

Residues 334-363 are a coiled coil; that stretch reads VNVGEQYQQLREAATEAEKQLQQYAESREL. Disordered regions lie at residues 414-475 and 493-641; these read RPNL…YHDD and DDNK…DIGQ. Over residues 531–546 the composition is skewed to polar residues; the sequence is SDNNQQSADSEEQGGQ. Residues 570–579 are compositionally biased toward acidic residues; it reads TLMDQGDDDP. A compositionally biased stretch (basic and acidic residues) spans 614 to 624; the sequence is AEAHEPPHKSS. The span at 625–634 shows a compositional bias: polar residues; it reads NEPAETSQLN.

Belongs to the filoviruses nucleoprotein family. In terms of assembly, homooligomer. Homomultimerizes to form the nucleocapsid. Binds to viral genomic RNA. Interacts with VP35 and VP30 to form the nucleocapsid. Interacts with host PPP2R5C; this interaction leads to VP30 dephosphorylation and viral transcription. Interacts with VP24; this interaction facilitates nucleocapsid assembly and genome packaging. Interacts with matrix protein VP40; this interaction allows recruitment of the nucleocapsid into progeny virions. Interacts with host STAU1. Interacts with host NXF1 (via RNA-binding domain); this interaction recruits NXF1 to the inclusion bodies were viral replication takes place, probably to export viral mRNA-NXF1 complexes from these sites. Interacts with host CCDC92; this interaction sequesters NP in the host cytoplasm. Interacts with host TRIM14. Phosphorylated and O-glycosylated by host. Acetylated by host EP300 in vitro.

Its subcellular location is the virion. The protein resides in the host cytoplasm. Functionally, oligomerizes into helical capsid to encapsidate the viral genome, protecting it from nucleases and the cellular innate immune response. VP35 binds to and stabilizes monomeric NP, keeping it soluble. Upon virus replication, NP is recruited to bind cooperatively viral genomic RNA and VP35 is released. The encapsidated genomic RNA is termed the nucleocapsid and serves as template for transcription and replication. The nucleocapsid is helical with a pitch of 10.81 NP per turn and a diameter of about 22nm. Each NP binds to six nucleotides of viral genomic RNA, three being exposed to the solvant and three hidden into the nucleocapsid. Also recruits host PPP2R5C phosphatase to dephosphorylate VP30 and thereby promote viral transcription. Upon virion assembly and budding, NP binds to VP24 and possibly host STAU1. This is Nucleoprotein (NP) from Reston ebolavirus (strain Reston-89) (REBOV).